The chain runs to 212 residues: uncharacterized protein (212 aa).

The protein belongs to the mimivirus R683/R861 family.

This is an uncharacterized protein from Acanthamoeba polyphaga (Amoeba).